Here is a 67-residue protein sequence, read N- to C-terminus: DNA-directed RNA polymerase subunit omega (67 aa).

The protein belongs to the RNA polymerase subunit omega family. As to quaternary structure, the RNAP catalytic core consists of 2 alpha, 1 beta, 1 beta' and 1 omega subunit. When a sigma factor is associated with the core the holoenzyme is formed, which can initiate transcription.

It catalyses the reaction RNA(n) + a ribonucleoside 5'-triphosphate = RNA(n+1) + diphosphate. Functionally, promotes RNA polymerase assembly. Latches the N- and C-terminal regions of the beta' subunit thereby facilitating its interaction with the beta and alpha subunits. This is DNA-directed RNA polymerase subunit omega from Burkholderia pseudomallei (strain 1106a).